A 161-amino-acid chain; its full sequence is Cytochrome b6-f complex subunit 4 (161 aa).

3 helical membrane passes run Leu37–Val57, Leu96–Glu116, and Ala130–Phe150.

The protein belongs to the cytochrome b family. PetD subfamily. The 4 large subunits of the cytochrome b6-f complex are cytochrome b6, subunit IV (17 kDa polypeptide, PetD), cytochrome f and the Rieske protein, while the 4 small subunits are PetG, PetL, PetM and PetN. The complex functions as a dimer.

It localises to the cellular thylakoid membrane. Component of the cytochrome b6-f complex, which mediates electron transfer between photosystem II (PSII) and photosystem I (PSI), cyclic electron flow around PSI, and state transitions. The polypeptide is Cytochrome b6-f complex subunit 4 (Synechococcus elongatus).